The following is a 133-amino-acid chain: Large ribosomal subunit protein bL20 (133 aa).

This sequence belongs to the bacterial ribosomal protein bL20 family.

In terms of biological role, binds directly to 23S ribosomal RNA and is necessary for the in vitro assembly process of the 50S ribosomal subunit. It is not involved in the protein synthesizing functions of that subunit. The polypeptide is Large ribosomal subunit protein bL20 (Rubrobacter xylanophilus (strain DSM 9941 / JCM 11954 / NBRC 16129 / PRD-1)).